We begin with the raw amino-acid sequence, 82 residues long: Delta-ctenitoxin-Pn1a (82 aa).

Positions 1-16 (MKVAIVFLSLLVLAFA) are cleaved as a signal peptide. Positions 17 to 34 (SESIEENREEFPVEESAR) are excised as a propeptide. Cystine bridges form between C35–C49, C42–C55, C46–C82, C48–C65, and C57–C63.

Belongs to the neurotoxin 03 (Tx2) family. 05 subfamily. Expressed by the venom gland.

It localises to the secreted. Its function is as follows. This neurotoxin binds at site 3 of insect voltage-activated sodium channels (Nav) and prolongs evoked axonal action potentials by a slowing down of sodium current inactivation. The toxin also inhibits glutamate uptake from rat brain synaptosomes. It reversibly inhibits the N-methyl-D-aspartate (NMDA)-subtype of ionotropic glutamate receptor (GRIN). In addition, the toxin shows antinociceptive effect in all rat pain models tested (inflammatory, neuropathic and nociceptive). The antinociceptive effect is partially blocked when selective antagonists of both mu- and delta-opioid receptors are administered, revealing that the antinociceptive effect of the toxin involves both opioid and cannabinoid endogenous systems. In vivo, it is highly toxic to house fly (Musca domestica), toxic to cockroach, but has no effect when intracerebroventricularly injected into mice. The polypeptide is Delta-ctenitoxin-Pn1a (Phoneutria nigriventer (Brazilian armed spider)).